We begin with the raw amino-acid sequence, 339 residues long: Undecaprenyl-phosphate 4-deoxy-4-formamido-L-arabinose transferase (339 aa).

A run of 2 helical transmembrane segments spans residues 235–255 and 269–289; these read LSLV…FLLV and LFVL…GMGL.

Belongs to the glycosyltransferase 2 family.

The protein localises to the cell inner membrane. The enzyme catalyses UDP-4-deoxy-4-formamido-beta-L-arabinose + di-trans,octa-cis-undecaprenyl phosphate = 4-deoxy-4-formamido-alpha-L-arabinopyranosyl di-trans,octa-cis-undecaprenyl phosphate + UDP. The protein operates within glycolipid biosynthesis; 4-amino-4-deoxy-alpha-L-arabinose undecaprenyl phosphate biosynthesis; 4-amino-4-deoxy-alpha-L-arabinose undecaprenyl phosphate from UDP-4-deoxy-4-formamido-beta-L-arabinose and undecaprenyl phosphate: step 1/2. It functions in the pathway bacterial outer membrane biogenesis; lipopolysaccharide biosynthesis. In terms of biological role, catalyzes the transfer of 4-deoxy-4-formamido-L-arabinose from UDP to undecaprenyl phosphate. The modified arabinose is attached to lipid A and is required for resistance to polymyxin and cationic antimicrobial peptides. The sequence is that of Undecaprenyl-phosphate 4-deoxy-4-formamido-L-arabinose transferase from Pseudomonas aeruginosa (strain LESB58).